Consider the following 90-residue polypeptide: Acylphosphatase (90 aa).

Residues 3 to 90 (QYRIIVDGRV…DGFQKFNISY (88 aa)) enclose the Acylphosphatase-like domain. Residues R18 and N36 contribute to the active site.

It belongs to the acylphosphatase family.

It carries out the reaction an acyl phosphate + H2O = a carboxylate + phosphate + H(+). In Bacillus licheniformis (strain ATCC 14580 / DSM 13 / JCM 2505 / CCUG 7422 / NBRC 12200 / NCIMB 9375 / NCTC 10341 / NRRL NRS-1264 / Gibson 46), this protein is Acylphosphatase (acyP).